The following is a 394-amino-acid chain: MKSFLVDQDGYYGEFGGAYVPEILHKCVEELKNTYLGVLESEDFKKEFDQLLRDYVGRPSPLYLARRLSEKYGCKMYLKREDLNHTGAHKINNTIGQILLARRMGKKRIIAETGAGQHGVATATVCALMDMECIVYMGKTDVERQHINVEKMKMLGATVIPVTSGNMTLKDATNEAIRDWCCHPADTYYIIGSTVGPHPYPDMVARLQSVISEEIKKQLMEKEGRDHPDYLIACVGGGSNAAGTIYHYINDGRVGIILAEAGGKGIETGMTAATIQLGKMGIIHGARTYVIQNEDGQIEEPYSISAGLDYPGIGPIHANLAAQRRATVLAVNDDEAIEAAYELTKLEGIIPALESAHALGALKKLKFKPEDVVVLTVSGRGDKDIETYLSFNEK.

An N6-(pyridoxal phosphate)lysine modification is found at K90.

The protein belongs to the TrpB family. As to quaternary structure, tetramer of two alpha and two beta chains. It depends on pyridoxal 5'-phosphate as a cofactor.

It catalyses the reaction (1S,2R)-1-C-(indol-3-yl)glycerol 3-phosphate + L-serine = D-glyceraldehyde 3-phosphate + L-tryptophan + H2O. Its pathway is amino-acid biosynthesis; L-tryptophan biosynthesis; L-tryptophan from chorismate: step 5/5. The beta subunit is responsible for the synthesis of L-tryptophan from indole and L-serine. The sequence is that of Tryptophan synthase beta chain from Bacteroides thetaiotaomicron (strain ATCC 29148 / DSM 2079 / JCM 5827 / CCUG 10774 / NCTC 10582 / VPI-5482 / E50).